Reading from the N-terminus, the 190-residue chain is GTP cyclohydrolase 1 (190 aa).

Residues cysteine 75, histidine 78, and cysteine 146 each contribute to the Zn(2+) site.

The protein belongs to the GTP cyclohydrolase I family. As to quaternary structure, toroid-shaped homodecamer, composed of two pentamers of five dimers.

The catalysed reaction is GTP + H2O = 7,8-dihydroneopterin 3'-triphosphate + formate + H(+). Its pathway is cofactor biosynthesis; 7,8-dihydroneopterin triphosphate biosynthesis; 7,8-dihydroneopterin triphosphate from GTP: step 1/1. The protein is GTP cyclohydrolase 1 of Campylobacter jejuni subsp. jejuni serotype O:23/36 (strain 81-176).